The chain runs to 337 residues: Anthraniloyl-CoA anthraniloyltransferase (337 aa).

T29 and F33 together coordinate anthraniloyl-CoA. Catalysis depends on C113, which acts as the Acyl-thioester intermediate. Residues 154–155 (RN), 221–224 (MRGR), and H258 contribute to the anthraniloyl-CoA site.

Belongs to the thiolase-like superfamily. FabH family. Homodimer.

The protein localises to the cytoplasm. It catalyses the reaction anthraniloyl-CoA + malonyl-CoA + H(+) = (2-aminobenzoyl)acetyl-CoA + CO2 + CoA. In terms of biological role, required for the biosynthesis of a number of signaling molecules, such as the quinolone signal 2-heptyl-3-hydroxy-4(1H)-quinolone (PQS), 2-heptyl-4-hydroxyquinoline (HHQ) and 2,4-dihydroxyquinoline (DHQ). These molecules are required for normal biofilm formation. Catalyzes the transfer of the anthraniloyl moiety from anthraniloyl-CoA to malonyl-CoA to form 2-aminobenzoylacetyl-CoA. The first step of the reaction is the formation of a covalent anthraniloyl-PqsD intermediate. Next, the short-lived intermediate 3-(2-aminophenyl)-3-oxopropanoyl-CoA is formed. An intramolecular rearrangement of this intermediate can give rise to 2,4-dihydroxyquinoline (DHQ). The protein is Anthraniloyl-CoA anthraniloyltransferase (pqsD) of Pseudomonas aeruginosa (strain ATCC 15692 / DSM 22644 / CIP 104116 / JCM 14847 / LMG 12228 / 1C / PRS 101 / PAO1).